The following is a 204-amino-acid chain: uncharacterized protein (204 aa).

The next 4 membrane-spanning stretches (helical) occupy residues 21 to 50 (AWIVFFTIPLVITPLPYVGFLAFFFILLFF), 92 to 114 (FFTALLYYLFTKFYAVLFFWWWF), 150 to 172 (LGLRWSFIGLVLLTIAVLLVLSI), and 176 to 198 (LLASFVVLLLSVVLAHFTAETIL).

Its subcellular location is the cell membrane. This is an uncharacterized protein from Aquifex aeolicus (strain VF5).